Here is a 327-residue protein sequence, read N- to C-terminus: Zinc transport protein ZntB (327 aa).

Residues 1-273 (MEAIKGSDVN…ARRTYTMSLM (273 aa)) lie on the Cytoplasmic side of the membrane. A helical transmembrane segment spans residues 274 to 294 (AMVFLPSTFLTGLFGVNLGGI). Over 295-300 (PGGGWR) the chain is Periplasmic. The helical transmembrane segment at 301 to 321 (FGFSLFCILLVVLIGGVTLWL) threads the bilayer. The Cytoplasmic segment spans residues 322–327 (HRSKWL).

The protein belongs to the CorA metal ion transporter (MIT) (TC 1.A.35) family.

It localises to the cell inner membrane. The catalysed reaction is Zn(2+)(out) + H(+)(out) = Zn(2+)(in) + H(+)(in). Functionally, zinc transporter. Acts as a Zn(2+):proton symporter, which likely mediates zinc ion uptake. This Salmonella agona (strain SL483) protein is Zinc transport protein ZntB.